A 229-amino-acid chain; its full sequence is 3-isopropylmalate dehydratase small subunit (229 aa).

The interval 208–229 is disordered; it reads KIESAREPDDDWTGPLADRGII.

Belongs to the LeuD family. LeuD type 1 subfamily. As to quaternary structure, heterodimer of LeuC and LeuD.

The enzyme catalyses (2R,3S)-3-isopropylmalate = (2S)-2-isopropylmalate. It functions in the pathway amino-acid biosynthesis; L-leucine biosynthesis; L-leucine from 3-methyl-2-oxobutanoate: step 2/4. Catalyzes the isomerization between 2-isopropylmalate and 3-isopropylmalate, via the formation of 2-isopropylmaleate. In Bifidobacterium longum subsp. infantis (strain ATCC 15697 / DSM 20088 / JCM 1222 / NCTC 11817 / S12), this protein is 3-isopropylmalate dehydratase small subunit.